The chain runs to 613 residues: Proline--tRNA ligase (613 aa).

Belongs to the class-II aminoacyl-tRNA synthetase family. ProS type 1 subfamily. As to quaternary structure, homodimer.

The protein localises to the cytoplasm. It catalyses the reaction tRNA(Pro) + L-proline + ATP = L-prolyl-tRNA(Pro) + AMP + diphosphate. Functionally, catalyzes the attachment of proline to tRNA(Pro) in a two-step reaction: proline is first activated by ATP to form Pro-AMP and then transferred to the acceptor end of tRNA(Pro). As ProRS can inadvertently accommodate and process non-cognate amino acids such as alanine and cysteine, to avoid such errors it has two additional distinct editing activities against alanine. One activity is designated as 'pretransfer' editing and involves the tRNA(Pro)-independent hydrolysis of activated Ala-AMP. The other activity is designated 'posttransfer' editing and involves deacylation of mischarged Ala-tRNA(Pro). The misacylated Cys-tRNA(Pro) is not edited by ProRS. The chain is Proline--tRNA ligase from Cyanothece sp. (strain PCC 7425 / ATCC 29141).